The chain runs to 180 residues: Large ribosomal subunit protein uL5 (180 aa).

Belongs to the universal ribosomal protein uL5 family. Part of the 50S ribosomal subunit; part of the 5S rRNA/L5/L18/L25 subcomplex. Contacts the 5S rRNA and the P site tRNA. Forms a bridge to the 30S subunit in the 70S ribosome.

Its function is as follows. This is one of the proteins that bind and probably mediate the attachment of the 5S RNA into the large ribosomal subunit, where it forms part of the central protuberance. In the 70S ribosome it contacts protein S13 of the 30S subunit (bridge B1b), connecting the 2 subunits; this bridge is implicated in subunit movement. Contacts the P site tRNA; the 5S rRNA and some of its associated proteins might help stabilize positioning of ribosome-bound tRNAs. The chain is Large ribosomal subunit protein uL5 from Ruminiclostridium cellulolyticum (strain ATCC 35319 / DSM 5812 / JCM 6584 / H10) (Clostridium cellulolyticum).